A 228-amino-acid chain; its full sequence is 7-cyano-7-deazaguanine synthase (228 aa).

9–19 (LSGGPDSTTVL) lines the ATP pocket. Residues C193, C203, C206, and C209 each coordinate Zn(2+).

This sequence belongs to the QueC family. The cofactor is Zn(2+).

It catalyses the reaction 7-carboxy-7-deazaguanine + NH4(+) + ATP = 7-cyano-7-deazaguanine + ADP + phosphate + H2O + H(+). It participates in purine metabolism; 7-cyano-7-deazaguanine biosynthesis. In terms of biological role, catalyzes the ATP-dependent conversion of 7-carboxy-7-deazaguanine (CDG) to 7-cyano-7-deazaguanine (preQ(0)). This Rickettsia africae (strain ESF-5) protein is 7-cyano-7-deazaguanine synthase.